The chain runs to 198 residues: V-type ATP synthase subunit E (198 aa).

The protein belongs to the V-ATPase E subunit family.

Functionally, produces ATP from ADP in the presence of a proton gradient across the membrane. This chain is V-type ATP synthase subunit E, found in Clostridium perfringens (strain ATCC 13124 / DSM 756 / JCM 1290 / NCIMB 6125 / NCTC 8237 / Type A).